The sequence spans 293 residues: Germ cell-specific gene 1-like protein 2 (293 aa).

Topologically, residues 1-8 (MDRAKQQQ) are cytoplasmic. The helical transmembrane segment at 9 to 29 (ALLLLPVCLALTFSLTAVVSS) threads the bilayer. Topologically, residues 30 to 120 (HWCEGTRRVV…RSVVPAEEQG (91 aa)) are extracellular. 2 N-linked (GlcNAc...) asparagine glycosylation sites follow: N59 and N67. The chain crosses the membrane as a helical span at residues 121-141 (VLWLSIGGEVLDIVLILTSAI). The Cytoplasmic segment spans residues 142-160 (LLGSRVSCRSPGFHWLRVD). The helical transmembrane segment at 161-181 (ALVAIFMVLAGLLGMVAHMMY) threads the bilayer. Residues 182–204 (TTIFQITVNLGPEDWKPQTWDYG) lie on the Extracellular side of the membrane. A helical membrane pass occupies residues 205 to 225 (WSYCLAWGSFALCLAVSVSAM). Over 226–293 (SRFTAARLEF…PGAPGKVSIC (68 aa)) the chain is Cytoplasmic.

It belongs to the GSG1 family.

It is found in the membrane. The chain is Germ cell-specific gene 1-like protein 2 from Homo sapiens (Human).